A 204-amino-acid polypeptide reads, in one-letter code: High frequency lysogenization protein HflD homolog (204 aa).

This sequence belongs to the HflD family.

The protein localises to the cytoplasm. The protein resides in the cell inner membrane. The polypeptide is High frequency lysogenization protein HflD homolog (Stenotrophomonas maltophilia (strain K279a)).